The chain runs to 836 residues: Protein PDC2 (836 aa).

The HTH CENPB-type domain occupies 64 to 139 (ELIRRRKRAN…VKKLNINITG (76 aa)). Residues 626–640 (TTSTSVVSDSPSGTT) show a composition bias toward low complexity. The interval 626–732 (TTSTSVVSDS…NVQFGNGAGS (107 aa)) is disordered. A compositionally biased stretch (polar residues) spans 641 to 651 (QKYNNISTYPN). A compositionally biased stretch (low complexity) spans 677 to 698 (GQELQNPQGQQQQEQQQQQQHQ). The segment covering 699-711 (MSGYNFSPISNIE) has biased composition (polar residues).

Functionally, essential for the synthesis of pyruvate decarboxylase. The polypeptide is Protein PDC2 (PDC2) (Candida albicans (Yeast)).